Here is a 972-residue protein sequence, read N- to C-terminus: Optomotor-blind protein (972 aa).

6 disordered regions span residues S44–A248, P263–H286, A508–A563, A645–P676, A805–L889, and E918–Q972. 2 stretches are compositionally biased toward low complexity: residues G49–N80 and S97–S142. Over residues P155 to N176 the composition is skewed to pro residues. Composition is skewed to low complexity over residues N177 to H193 and A201 to P212. Residues P213–P225 show a composition bias toward pro residues. Positions H226–H237 are enriched in low complexity. Residues P274–H286 are compositionally biased toward basic residues. Positions L332 to D513 form a DNA-binding region, T-box. The span at P818–V831 shows a compositional bias: gly residues. Low complexity predominate over residues P835 to P851. S887 carries the post-translational modification Phosphoserine. A compositionally biased stretch (basic residues) spans H952 to H963.

In third-instar larvae, expressed in the brain region that will develop into optic lobes and more weakly in the thoracic part of the ventral ganglion.

It localises to the nucleus. In terms of biological role, essential protein that may function as a transcription regulator. Vital for pupal development. Required for proper development of the optic lobes and wings, and abdominal pigmentation. The sequence is that of Optomotor-blind protein (bi) from Drosophila melanogaster (Fruit fly).